Reading from the N-terminus, the 765-residue chain is E3 ubiquitin-protein ligase SMURF2 (765 aa).

The C2 domain maps to 1–117; that stretch reads MSNQGVRRNG…KDTGYQRLDL (117 aa). WW domains are found at residues 157–190, 251–284, and 297–330; these read NDLPDGWEERRTASGRIQYLNHITRSTQWERPTR, PDLPEGYEQRTTQQGQVYFLHTQTGVSTWHDPRV, and GPLPPGWEIRNTATGRVYFVDHNNRTTQFTDPRL. The tract at residues 341 to 375 is disordered; the sequence is SPNGSRAAVEAQSSSRPGQLKEQAQSVVSPGNLPE. A compositionally biased stretch (polar residues) spans 351–369; the sequence is AQSSSRPGQLKEQAQSVVS. Residues 431–765 enclose the HECT domain; that stretch reads RPKDLWKRLM…IEETCGFAVE (335 aa). Cys-733 serves as the catalytic Glycyl thioester intermediate.

It localises to the nucleus. Its subcellular location is the cytoplasm. It is found in the cell membrane. The protein localises to the membrane raft. It catalyses the reaction S-ubiquitinyl-[E2 ubiquitin-conjugating enzyme]-L-cysteine + [acceptor protein]-L-lysine = [E2 ubiquitin-conjugating enzyme]-L-cysteine + N(6)-ubiquitinyl-[acceptor protein]-L-lysine.. The protein operates within protein modification; protein ubiquitination. Its function is as follows. E3 ubiquitin-protein ligase which accepts ubiquitin from an E2 ubiquitin-conjugating enzyme in the form of a thioester and then directly transfers the ubiquitin to targeted substrates. The sequence is that of E3 ubiquitin-protein ligase SMURF2 (smurf2) from Danio rerio (Zebrafish).